We begin with the raw amino-acid sequence, 813 residues long: Glycerol-3-phosphate acyltransferase (813 aa).

The HXXXXD motif signature appears at 304 to 309 (CHRSHI).

This sequence belongs to the GPAT/DAPAT family.

The protein localises to the cell inner membrane. It catalyses the reaction sn-glycerol 3-phosphate + an acyl-CoA = a 1-acyl-sn-glycero-3-phosphate + CoA. The protein operates within phospholipid metabolism; CDP-diacylglycerol biosynthesis; CDP-diacylglycerol from sn-glycerol 3-phosphate: step 1/3. The polypeptide is Glycerol-3-phosphate acyltransferase (Actinobacillus succinogenes (strain ATCC 55618 / DSM 22257 / CCUG 43843 / 130Z)).